A 1058-amino-acid chain; its full sequence is Carbamoyl phosphate synthase pyrimidine-specific large chain (1058 aa).

Residues methionine 1–glutamate 401 form a carboxyphosphate synthetic domain region. Positions 129, 169, 175, 176, 208, 210, 215, 241, 242, 243, 284, and 298 each coordinate ATP. In terms of domain architecture, ATP-grasp 1 spans lysine 133–valine 327. Residues glutamine 284, glutamate 298, and asparagine 300 each contribute to the Mg(2+) site. 3 residues coordinate Mn(2+): glutamine 284, glutamate 298, and asparagine 300. Positions isoleucine 402 to serine 546 are oligomerization domain. Residues isoleucine 547–lysine 929 form a carbamoyl phosphate synthetic domain region. The 191-residue stretch at aspartate 671–leucine 861 folds into the ATP-grasp 2 domain. ATP is bound by residues arginine 707, serine 746, leucine 748, glutamate 752, glycine 777, valine 778, histidine 779, serine 780, glutamine 820, and glutamate 832. The Mg(2+) site is built by glutamine 820, glutamate 832, and asparagine 834. Glutamine 820, glutamate 832, and asparagine 834 together coordinate Mn(2+). In terms of domain architecture, MGS-like spans leucine 930 to leucine 1058. An allosteric domain region spans residues leucine 930–leucine 1058.

Belongs to the CarB family. Composed of two chains; the small (or glutamine) chain promotes the hydrolysis of glutamine to ammonia, which is used by the large (or ammonia) chain to synthesize carbamoyl phosphate. Tetramer of heterodimers (alpha,beta)4. It depends on Mg(2+) as a cofactor. Mn(2+) serves as cofactor.

It carries out the reaction hydrogencarbonate + L-glutamine + 2 ATP + H2O = carbamoyl phosphate + L-glutamate + 2 ADP + phosphate + 2 H(+). It catalyses the reaction hydrogencarbonate + NH4(+) + 2 ATP = carbamoyl phosphate + 2 ADP + phosphate + 2 H(+). It functions in the pathway amino-acid biosynthesis; L-arginine biosynthesis; carbamoyl phosphate from bicarbonate: step 1/1. It participates in pyrimidine metabolism; UMP biosynthesis via de novo pathway; (S)-dihydroorotate from bicarbonate: step 1/3. Its function is as follows. Small subunit of the glutamine-dependent carbamoyl phosphate synthetase (CPSase). CPSase catalyzes the formation of carbamoyl phosphate from the ammonia moiety of glutamine, carbonate, and phosphate donated by ATP, constituting the first step of the biosynthetic pathway leading to pyrimidine nucleotides. The large subunit (synthetase) binds the substrates ammonia (free or transferred from glutamine from the small subunit), hydrogencarbonate and ATP and carries out an ATP-coupled ligase reaction, activating hydrogencarbonate by forming carboxy phosphate which reacts with ammonia to form carbamoyl phosphate. The chain is Carbamoyl phosphate synthase pyrimidine-specific large chain (pyrAB) from Lactiplantibacillus plantarum (strain ATCC BAA-793 / NCIMB 8826 / WCFS1) (Lactobacillus plantarum).